A 155-amino-acid polypeptide reads, in one-letter code: 6,7-dimethyl-8-ribityllumazine synthase (155 aa).

Residues Phe-23, Ala-57–Glu-59, and Ala-81–Ile-83 each bind 5-amino-6-(D-ribitylamino)uracil. Position 86-87 (Ser-86–Thr-87) interacts with (2S)-2-hydroxy-3-oxobutyl phosphate. Catalysis depends on His-89, which acts as the Proton donor. Phe-114 contributes to the 5-amino-6-(D-ribitylamino)uracil binding site. Arg-128 lines the (2S)-2-hydroxy-3-oxobutyl phosphate pocket.

This sequence belongs to the DMRL synthase family.

The catalysed reaction is (2S)-2-hydroxy-3-oxobutyl phosphate + 5-amino-6-(D-ribitylamino)uracil = 6,7-dimethyl-8-(1-D-ribityl)lumazine + phosphate + 2 H2O + H(+). It participates in cofactor biosynthesis; riboflavin biosynthesis; riboflavin from 2-hydroxy-3-oxobutyl phosphate and 5-amino-6-(D-ribitylamino)uracil: step 1/2. Its function is as follows. Catalyzes the formation of 6,7-dimethyl-8-ribityllumazine by condensation of 5-amino-6-(D-ribitylamino)uracil with 3,4-dihydroxy-2-butanone 4-phosphate. This is the penultimate step in the biosynthesis of riboflavin. The polypeptide is 6,7-dimethyl-8-ribityllumazine synthase (Desulfatibacillum aliphaticivorans).